A 304-amino-acid chain; its full sequence is Porphobilinogen deaminase (304 aa).

An S-(dipyrrolylmethanemethyl)cysteine modification is found at Cys-241.

This sequence belongs to the HMBS family. As to quaternary structure, monomer. Dipyrromethane is required as a cofactor.

It carries out the reaction 4 porphobilinogen + H2O = hydroxymethylbilane + 4 NH4(+). It participates in porphyrin-containing compound metabolism; protoporphyrin-IX biosynthesis; coproporphyrinogen-III from 5-aminolevulinate: step 2/4. Tetrapolymerization of the monopyrrole PBG into the hydroxymethylbilane pre-uroporphyrinogen in several discrete steps. The sequence is that of Porphobilinogen deaminase from Ruthia magnifica subsp. Calyptogena magnifica.